Consider the following 706-residue polypeptide: Probable N(6)-adenosine-methyltransferase MT-A70-like (706 aa).

Disordered stretches follow at residues 64–114 (RPFV…VAAA) and 223–261 (TLPL…PDMW). Low complexity predominate over residues 103–114 (SPGSSPASVAAA). Residues 227 to 236 (LQPPPAPQMP) show a composition bias toward pro residues. S-adenosyl-L-methionine-binding positions include 479 to 480 (DI) and aspartate 497. Residues 567 to 580 (RIIRTGRTGHWLNH) are positively charged region required for RNA-binding. Residues lysine 614, 637 to 640 (RMHN), and 650 to 651 (NQ) each bind S-adenosyl-L-methionine. The tract at residues 669 to 706 (AYPDSEVQPPSPPRASAPIDGDQGTSQKPTVSDGERPA) is disordered.

It belongs to the MT-A70-like family.

Its subcellular location is the nucleus. The catalysed reaction is an adenosine in mRNA + S-adenosyl-L-methionine = an N(6)-methyladenosine in mRNA + S-adenosyl-L-homocysteine + H(+). Functionally, probable N6-methyltransferase that methylates adenosine residues of some mRNAs. N6-methyladenosine (m6A), which is present at internal sites of some mRNAs, may play a role in the efficiency of mRNA splicing, transport or translation. In Oryza sativa subsp. japonica (Rice), this protein is Probable N(6)-adenosine-methyltransferase MT-A70-like.